Reading from the N-terminus, the 254-residue chain is Small ribosomal subunit protein uS2 (254 aa).

Belongs to the universal ribosomal protein uS2 family.

This is Small ribosomal subunit protein uS2 from Legionella pneumophila subsp. pneumophila (strain Philadelphia 1 / ATCC 33152 / DSM 7513).